Reading from the N-terminus, the 208-residue chain is Glutathione S-transferase (208 aa).

In terms of domain architecture, GST N-terminal spans 1–78; that stretch reads MSYKLTYFPI…HLARKFNLNG (78 aa). Glutathione is bound by residues tyrosine 7, lysine 42, 49-50, and 62-63; these read QL and QS. A GST C-terminal domain is found at 80–200; it reads NNAETSYVDM…YCAKRNASKM (121 aa).

This sequence belongs to the GST superfamily. Pi family. In terms of assembly, homodimer.

The enzyme catalyses RX + glutathione = an S-substituted glutathione + a halide anion + H(+). In terms of biological role, conjugation of reduced glutathione to a wide number of exogenous and endogenous hydrophobic electrophiles. This Dirofilaria immitis (Canine heartworm) protein is Glutathione S-transferase.